A 421-amino-acid polypeptide reads, in one-letter code: UDP-N-acetylglucosamine 1-carboxyvinyltransferase (421 aa).

22-23 contacts phosphoenolpyruvate; that stretch reads KN. Residue R92 participates in UDP-N-acetyl-alpha-D-glucosamine binding. C116 (proton donor) is an active-site residue. C116 is modified (2-(S-cysteinyl)pyruvic acid O-phosphothioketal). 2 residues coordinate UDP-N-acetyl-alpha-D-glucosamine: D306 and V328.

The protein belongs to the EPSP synthase family. MurA subfamily.

The protein resides in the cytoplasm. It carries out the reaction phosphoenolpyruvate + UDP-N-acetyl-alpha-D-glucosamine = UDP-N-acetyl-3-O-(1-carboxyvinyl)-alpha-D-glucosamine + phosphate. It functions in the pathway cell wall biogenesis; peptidoglycan biosynthesis. In terms of biological role, cell wall formation. Adds enolpyruvyl to UDP-N-acetylglucosamine. This Thermotoga petrophila (strain ATCC BAA-488 / DSM 13995 / JCM 10881 / RKU-1) protein is UDP-N-acetylglucosamine 1-carboxyvinyltransferase.